Here is a 280-residue protein sequence, read N- to C-terminus: DCN1-like protein 4 (280 aa).

A disordered region spans residues glycine 37 to glutamine 71. The DCUN1 domain occupies phenylalanine 89 to lysine 275.

May interact (via the DCUN1 domain) with unneddylated cullins.

It is found in the nucleus. Contributes to the neddylation of all cullins by transferring NEDD8 from N-terminally acetylated NEDD8-conjugating E2s enzyme to different cullin C-terminal domain-RBX complexes. This is DCN1-like protein 4 from Danio rerio (Zebrafish).